Consider the following 847-residue polypeptide: UPF0182 protein CYB_0372 (847 aa).

Helical transmembrane passes span 7–27 (GLFL…LAAF), 51–71 (WGLG…NICS), 76–96 (ATLA…AGSL), 141–161 (FNLV…ELGL), 168–188 (LALS…LFLI), 220–240 (LPAT…FWAL), and 259–279 (WASS…FGLL).

Belongs to the UPF0182 family.

Its subcellular location is the cell membrane. In Synechococcus sp. (strain JA-2-3B'a(2-13)) (Cyanobacteria bacterium Yellowstone B-Prime), this protein is UPF0182 protein CYB_0372.